We begin with the raw amino-acid sequence, 479 residues long: Phosphatidylinositol 4-kinase type 2-alpha (479 aa).

The residue at position 1 (M1) is an N-acetylmethionine. Positions 1–74 are disordered; the sequence is MDETSPLVSP…ARGAAAQGQT (74 aa). S5, S9, S44, S47, and S51 each carry phosphoserine. Over residues 31 to 45 the composition is skewed to low complexity; it reads VPGGAVRVAAAAGSG. Positions 53–66 are enriched in basic and acidic residues; that stretch reads GHDRERQPLLDRAR. Positions 124-453 constitute a PI3K/PI4K catalytic domain; the sequence is CIFPERIYQG…VQMPPVIVET (330 aa). A G-loop region spans residues 130–136; that stretch reads IYQGSSG. Residues 131-137 and K152 contribute to the ATP site; that span reads YQGSSGS. An important for substrate binding region spans residues 157–159; sequence EPY. Residues 165–178 form an important for interaction with membranes region; sequence KWTKWLQKLCCPCC. 4 S-palmitoyl cysteine lipidation sites follow: C174, C175, C177, and C178. 261–264 is a binding site for ATP; the sequence is QLFV. The tract at residues 268 to 276 is important for interaction with membranes; that stretch reads KDADYWLRR. The catalytic loop stretch occupies residues 305–313; sequence RNTDRGNDN. The segment at 344 to 364 is activation loop; it reads AIDNGLAFPLKHPDSWRAYPF. Residue D346 participates in ATP binding. The important for interaction with membranes stretch occupies residues 359–368; that stretch reads WRAYPFYWAW. A Phosphoserine modification is found at S462.

This sequence belongs to the PI3/PI4-kinase family. Type II PI4K subfamily. As to quaternary structure, associates with the BLOC-1 and the AP-3 complexes; the BLOC-1 complex is required for optimal binding of PI4K2A to the AP-3 complex. Interacts with BLOC1S5 and DTNBP1. Interacts with FOS; this interaction may enhance phosphatidylinositol phosphorylation activity. Interacts with ITCH. Interacts with ATG9A. Palmitoylated by ZDHHC3 and ZDHHC7 in the CCPCC motif. Palmitoylation is cholesterol-dependent, and required for TGN localization. In terms of processing, ubiquitinated by ITCH; this does not lead to proteasomal degradation. In terms of tissue distribution, widely expressed. Highest expression is observed in kidney, brain, heart, skeletal muscle, and placenta and lowest expression is observed in colon, thymus, and small intestine.

It is found in the golgi apparatus. The protein localises to the trans-Golgi network membrane. Its subcellular location is the membrane raft. It localises to the cell projection. The protein resides in the dendrite. It is found in the presynaptic cell membrane. The protein localises to the synapse. Its subcellular location is the synaptosome. It localises to the mitochondrion. The protein resides in the endosome. It is found in the endosome membrane. The protein localises to the cytoplasmic vesicle. Its subcellular location is the membrane. It localises to the cell membrane. The protein resides in the perikaryon. It is found in the neuron projection. It carries out the reaction a 1,2-diacyl-sn-glycero-3-phospho-(1D-myo-inositol) + ATP = a 1,2-diacyl-sn-glycero-3-phospho-(1D-myo-inositol 4-phosphate) + ADP + H(+). Membrane-bound phosphatidylinositol-4 kinase (PI4-kinase) that catalyzes the phosphorylation of phosphatidylinositol (PI) to phosphatidylinositol 4-phosphate (PI4P), a lipid that plays important roles in endocytosis, Golgi function, protein sorting and membrane trafficking and is required for prolonged survival of neurons. Besides, phosphorylation of phosphatidylinositol (PI) to phosphatidylinositol 4-phosphate (PI4P) is the first committed step in the generation of phosphatidylinositol 4,5-bisphosphate (PIP2), a precursor of the second messenger inositol 1,4,5-trisphosphate (InsP3). This chain is Phosphatidylinositol 4-kinase type 2-alpha (PI4K2A), found in Homo sapiens (Human).